The chain runs to 1366 residues: DNA-directed RNA polymerase subunit beta (1366 aa).

This sequence belongs to the RNA polymerase beta chain family. As to quaternary structure, the RNAP catalytic core consists of 2 alpha, 1 beta, 1 beta' and 1 omega subunit. When a sigma factor is associated with the core the holoenzyme is formed, which can initiate transcription.

The enzyme catalyses RNA(n) + a ribonucleoside 5'-triphosphate = RNA(n+1) + diphosphate. In terms of biological role, DNA-dependent RNA polymerase catalyzes the transcription of DNA into RNA using the four ribonucleoside triphosphates as substrates. In Marinomonas sp. (strain MWYL1), this protein is DNA-directed RNA polymerase subunit beta.